The chain runs to 660 residues: MAPFPDEVDLFTGPHWRMKQLVGRYCEKLSNTNFSSNTDFLALLQSLYETFKEFKMHEQIENEYIIGLLQQRSQTVFNVHSDNKLSEMLVLFEKGMKNNEYEQLNYAQQLKERLEAFTSDFLPHMKEEEEVFQPMLMEYFTYDELKDIKKKVIAQHCSQKDTAELLRGFSLWNKAEELQKVFKYSVDEKIERDSKNRKSSASICNLPPEVMLNIFSYLNPQDLCRCSQVNTKWAQLARTGSLWRHLYPVLWARGDWYSGPPTHLDNEPDEDWISRRKDESRAYQEWDEDADIDESEETGEDDPSISVAQREKELLNSLVHYILPYIGHSVKTLVLAYSSATSNKVIRQILEYCPNMEHLDLTQTDISDSAFNGWCFGACQTLRHIDLSGCEKITDSALEKLSVALGMPLAHKKRLLKCYRNNRTVKDIRNQMRCGSLAQITGESGIYSDYSSSQIWILNSGNLGDIEDAADWKFRTTDGLGVLEMTPNLTCFSNGCCSRAVPGRWTNVIRQEHCKAAPLNYCGHTLCGNTLRTIQALPGSNIGTKTLQSEIRDICPGSAKLDQQVARVLQFLSLSGCHQITDHGLRVLTIGGGLPNLEHLNLSGCLNVTGSGLQDLVSACPSLNDEHFYYCDNISGPHAATASGCQNLQCGFRACCRSGE.

Residues 1-157 form a hemerythrin-like region; it reads MAPFPDEVDL…IKKKVIAQHC (157 aa). Fe(3+)-binding residues include histidine 15, histidine 57, glutamate 58, glutamate 61, histidine 80, histidine 124, and glutamate 127. An F-box domain is found at 200–246; sequence SASICNLPPEVMLNIFSYLNPQDLCRCSQVNTKWAQLARTGSLWRHL. Residues 283 to 305 are disordered; that stretch reads YQEWDEDADIDESEETGEDDPSI. Over residues 285-303 the composition is skewed to acidic residues; sequence EWDEDADIDESEETGEDDP. LRR repeat units follow at residues 311 to 337, 338 to 362, 363 to 389, 390 to 417, 551 to 576, 577 to 604, 605 to 630, and 631 to 649; these read EKEL…VLAY, SSAT…LDLT, QTDI…DLSG, CEKI…RLLK, IRDI…SLSG, CHQI…NLSG, CLNV…HFYY, and CDNI…QNLQ. 4 residues coordinate [2Fe-2S] cluster: cysteine 631, cysteine 645, cysteine 655, and cysteine 656.

In terms of assembly, part of a SCF (SKP1-cullin-F-box) protein ligase complex. It depends on [2Fe-2S] cluster as a cofactor. In terms of processing, ubiquitinated upon iron and oxygen depletion, leading to its degradation by the proteasome. Ubiquitination is regulated by the hemerythrin-like region that acts as an oxygen and iron sensor.

It is found in the cytoplasm. The protein localises to the perinuclear region. It localises to the nucleus. The protein operates within protein modification; protein ubiquitination. Functionally, component of some SCF (SKP1-cullin-F-box) protein ligase complex that plays a central role in iron homeostasis by promoting the ubiquitination and subsequent degradation of ireb2/irp2. Upon high iron and oxygen level, it specifically recognizes and binds ireb2/irp2, promoting its ubiquitination and degradation by the proteasome. The polypeptide is F-box/LRR-repeat protein 5 (fbxl5) (Xenopus tropicalis (Western clawed frog)).